Consider the following 242-residue polypeptide: MSMLCYTLIIAFLIGIWAAPQSEDNVPLGSPATSDLSDTSCAQTHEGLKTSRNTDQRHPAPKKVDDQELGSVANIIVDPKLFQKRQFQSSRVLFSTQPPPLSRDEQSVEFLDNEDALNRNIQAKRQNHPVHDLGEHSVCDSISEWVTKTTATDIKGNTVTVEVDVNLNNEVYKQYFFETKCRNPNPVPSGCRGIDSRLWNSYCTTTQTFVKALTMEGNQASWRFIRIDTACVCVITKKTDNL.

The signal sequence occupies residues 1–18; it reads MSMLCYTLIIAFLIGIWA. Positions 19–125 are excised as a propeptide; it reads APQSEDNVPL…ALNRNIQAKR (107 aa). 3 cysteine pairs are disulfide-bonded: C139–C203, C181–C231, and C191–C233.

Belongs to the NGF-beta family. In terms of assembly, homodimer; non-covalently linked. In terms of tissue distribution, expressed by the venom gland.

The protein resides in the secreted. Nerve growth factor is important for the development and maintenance of the sympathetic and sensory nervous systems. It stimulates division and differentiation of sympathetic and embryonic sensory neurons as well as basal forebrain cholinergic neurons in the brain. Its relevance in the snake venom is not clear. However, it has been shown to inhibit metalloproteinase-dependent proteolysis of platelet glycoprotein Ib alpha, suggesting a metalloproteinase inhibition to prevent metalloprotease autodigestion and/or protection against prey proteases. Binds a lipid between the two protein chains in the homodimer. The lipid-bound form promotes histamine relase from mouse mast cells, contrary to the lipid-free form. This is Venom nerve growth factor 1 from Pseudechis australis (Mulga snake).